Reading from the N-terminus, the 894-residue chain is Protein SEY1 homolog (894 aa).

Low complexity-rich tracts occupy residues 1 to 10 (MSEEITTNQT) and 36 to 48 (VQEQ…QEQQ). Positions 1–97 (MSEEITTNQT…QKQQTQEQEH (97 aa)) are disordered. Topologically, residues 1–800 (MSEEITTNQT…EQNRLTSGGG (800 aa)) are cytoplasmic. Residues 21-60 (RLSNENIKQEDEEQQVQEQQEQQQQEQQEQIDDQDTQQQE) adopt a coiled-coil conformation. Over residues 49 to 65 (EQIDDQDTQQQEDEFVV) the composition is skewed to acidic residues. A compositionally biased stretch (low complexity) spans 78 to 93 (TPTLQETPQQQKQQTQ). The 224-residue stretch at 138–361 (GFDYSVISIL…ADSFIPKRKY (224 aa)) folds into the GB1/RHD3-type G domain. GTP is bound at residue 148–155 (GPQSSGKS). The helical transmembrane segment at 801–821 (VPGYMIILLCVLGFNEFISII) threads the bilayer. Residues 822-824 (SSP) lie on the Lumenal side of the membrane. Residues 825 to 845 (LLLLLTILLGGVGFVLFKLGL) form a helical membrane-spanning segment. Residues 846–894 (AGPFIDYSSQILVHFISKVKDIVLHVEQLQEQNHNNNNNNNNTPKQKRE) are Cytoplasmic-facing.

The protein belongs to the TRAFAC class dynamin-like GTPase superfamily. GB1/RHD3 GTPase family. RHD3 subfamily.

It is found in the endoplasmic reticulum membrane. Its function is as follows. Probable GTP-binding protein that may be involved in cell development. The chain is Protein SEY1 homolog from Dictyostelium discoideum (Social amoeba).